A 1796-amino-acid polypeptide reads, in one-letter code: Y' element ATP-dependent helicase protein 1 copy 5 (1796 aa).

Residues 743 to 767 (AGEAASSDHDQKISRVTRKRPREPK) form a disordered region. The Helicase ATP-binding domain maps to 797–974 (EIYMADTPSV…LQRIGLTGLA (178 aa)). 810-817 (APPGYGKT) lines the ATP pocket. The 150-residue stretch at 1031-1180 (KLLLALFEIE…EFYGLESKKG (150 aa)) folds into the Helicase C-terminal domain. Disordered regions lie at residues 1254–1278 (ANASTNATTNSSTNATTTASTNVRT) and 1294–1421 (TTES…DINK). Residues 1294 to 1397 (TTESTNSSTN…ATTTESTNAS (104 aa)) are compositionally biased toward low complexity. Residues 1398 to 1421 (AKEDANKDGNAEDNRFHPVTDINK) show a composition bias toward basic and acidic residues.

Belongs to the helicase family. Yeast subtelomeric Y' repeat subfamily.

Its function is as follows. Catalyzes DNA unwinding and is involved in telomerase-independent telomere maintenance. In Saccharomyces cerevisiae (strain ATCC 204508 / S288c) (Baker's yeast), this protein is Y' element ATP-dependent helicase protein 1 copy 5 (YRF1-5).